A 264-amino-acid polypeptide reads, in one-letter code: THAP domain-containing protein 10 (264 aa).

The THAP-type zinc finger occupies methionine 1–histidine 90. Disordered stretches follow at residues histidine 90–glycine 136 and threonine 160–arginine 195. Residues glycine 99–glutamate 122 are compositionally biased toward basic and acidic residues. Residues threonine 160–proline 175 are compositionally biased toward polar residues.

This Pongo abelii (Sumatran orangutan) protein is THAP domain-containing protein 10 (THAP10).